The sequence spans 300 residues: UPF0761 membrane protein Patl_3954 (300 aa).

6 helical membrane-spanning segments follow: residues leucine 46 to phenylalanine 66, methionine 103 to aspartate 123, isoleucine 138 to leucine 158, methionine 184 to valine 204, alanine 214 to phenylalanine 234, and alanine 248 to leucine 268.

This sequence belongs to the UPF0761 family.

The protein localises to the cell inner membrane. The polypeptide is UPF0761 membrane protein Patl_3954 (Pseudoalteromonas atlantica (strain T6c / ATCC BAA-1087)).